A 1657-amino-acid chain; its full sequence is Thrombospondin type-1 domain-containing protein 7A (1657 aa).

An N-terminal signal peptide occupies residues 1–47 (MGLQARRWASGSRGAAGPRRGVLQLLPLPLPLPLLLLLLLRPGAGRA). Topologically, residues 48-1607 (AAQGEAEAPT…FGPDGRLKTW (1560 aa)) are extracellular. TSP type-1 domains lie at 57–116 (TLYL…KVCD), 120–192 (ELYD…IPCQ), and 194–247 (DCIV…SPCE). N234 carries an N-linked (GlcNAc...) asparagine glycan. The interval 265 to 311 (MPHSRQVRQARRRGKNKEREKDRSKGVKDPEARELIKKKRNRNRQNR) is disordered. Residues 267–315 (HSRQVRQARRRGKNKEREKDRSKGVKDPEARELIKKKRNRNRQNRQENK) are a coiled coil. Residues 269 to 280 (RQVRQARRRGKN) show a composition bias toward basic residues. Positions 281–299 (KEREKDRSKGVKDPEAREL) are enriched in basic and acidic residues. A compositionally biased stretch (basic residues) spans 300–309 (IKKKRNRNRQ). N-linked (GlcNAc...) asparagine glycosylation occurs at N332. TSP type-1 domains follow at residues 360–416 (ECQV…LSQG), 423–510 (ATYG…IPCP), 512–574 (ECEV…PACY), 634–695 (DCVL…HPCT), 696–769 (VYHW…LPCK), 771–831 (DCIV…QACQ), 832–904 (SYRW…IPCQ), 906–959 (DCQL…CPCD), 960–1033 (KYNA…IPCP), 1035–1095 (DCKL…SDCN), 1096–1163 (QYLW…LPCP), 1166–1220 (CVIS…KNCY), 1221–1284 (HYDY…VECP), 1286–1341 (NCQL…KPCY), 1342–1412 (RWQY…QPCP), and 1414–1475 (DCYL…GQCY). 3 cysteine pairs are disulfide-bonded: C435/C505, C455/C509, and C466/C494. N-linked (GlcNAc...) asparagine glycosylation is present at N450. Residue N500 is glycosylated (N-linked (GlcNAc...) asparagine). Disulfide bonds link C635-C677 and C646-C650. Residue N679 is glycosylated (N-linked (GlcNAc...) asparagine). 7 cysteine pairs are disulfide-bonded: C689–C694, C707–C764, C728–C768, C739–C752, C772–C814, C783–C787, and C824–C830. An N-linked (GlcNAc...) asparagine glycan is attached at N717. N-linked (GlcNAc...) asparagine glycosylation is present at N968. Disulfide bonds link C972-C1028, C994-C1032, C1005-C1018, C1036-C1073, C1047-C1051, and C1090-C1094. N-linked (GlcNAc...) asparagine glycosylation occurs at N1043. N-linked (GlcNAc...) asparagine glycosylation is present at N1182. C1213 and C1219 are disulfide-bonded. N-linked (GlcNAc...) asparagine glycosylation occurs at N1225. 12 disulfides stabilise this stretch: C1232–C1279, C1240–C1283, C1251–C1264, C1287–C1325, C1298–C1302, C1335–C1340, C1351–C1407, C1358–C1411, C1369–C1388, C1415–C1459, C1426–C1430, and C1469–C1474. Residue N1276 is glycosylated (N-linked (GlcNAc...) asparagine). N-linked (GlcNAc...) asparagine glycosylation is present at N1366. N-linked (GlcNAc...) asparagine glycans are attached at residues N1500 and N1547. Residues 1570–1591 (DVKTSRAVHPTQPSSNPAGRGR) form a disordered region. A helical membrane pass occupies residues 1608–1628 (VYGVAAGAFVLLIFIVSMIYL). The Cytoplasmic portion of the chain corresponds to 1629–1657 (ACKKPKKPQRRQNNRLKPLTLAYDGDADM).

Post-translationally, proteolytic cleavage in the extracellular region generates a 210 kDa soluble form. Extensively N-glycosylated. As to expression, detected on kidney podocytes along the glomerular capillary wall (at protein level).

It localises to the cell membrane. The protein localises to the cell projection. It is found in the secreted. Its function is as follows. Plays a role in actin cytoskeleton rearrangement. The soluble form promotes endothelial cell migration and filopodia formation during sprouting angiogenesis via a FAK-dependent mechanism. This Homo sapiens (Human) protein is Thrombospondin type-1 domain-containing protein 7A (THSD7A).